The chain runs to 274 residues: Large ribosomal subunit protein uL2cy (274 aa).

Disordered stretches follow at residues 1 to 20 and 224 to 274; these read MAIHLYKTSTPSTRNGAVDS and NPVD…RRSK.

It belongs to the universal ribosomal protein uL2 family. Part of the 50S ribosomal subunit.

It is found in the plastid. Its subcellular location is the chloroplast. This is Large ribosomal subunit protein uL2cy (rpl2-B) from Populus alba (White poplar).